We begin with the raw amino-acid sequence, 133 residues long: Holo-[acyl-carrier-protein] synthase (133 aa).

Asp-8 and Glu-56 together coordinate Mg(2+).

The protein belongs to the P-Pant transferase superfamily. AcpS family. Mg(2+) serves as cofactor.

The protein resides in the cytoplasm. The catalysed reaction is apo-[ACP] + CoA = holo-[ACP] + adenosine 3',5'-bisphosphate + H(+). Transfers the 4'-phosphopantetheine moiety from coenzyme A to a Ser of acyl-carrier-protein. The chain is Holo-[acyl-carrier-protein] synthase from Clostridium perfringens (strain ATCC 13124 / DSM 756 / JCM 1290 / NCIMB 6125 / NCTC 8237 / Type A).